Consider the following 326-residue polypeptide: MFISISAGIVTFLLTLVGIPAFIQFYRKAQITGQQMHEDVKQHQAKAGTPTMGGLIFLIAAVVVSFLVALFSKQLTNNVGMILFILVLYGLVGFLDDFLKVFRKINEGLNPKQKLALQLLGGVIFYLFYERGGDMLSIFGYQVHLGIFYIVFALFWLVGFSNAVNLTDGIDGLASISVVISLSAYGVIAYVQGQMDILLVILAMIGGLLGFFVFNHKPAKVFMGDVGSLALGGMLAAISMALHQEWTLLIIGIVYVFETTSVMMQVSYFKLTGGKRIFRMTPVHHHFELGGLSGKGNPWSEWKVDFFFWGVGLLASLLTLAILYLR.

Transmembrane regions (helical) follow at residues 3–23 (ISIS…PAFI), 51–71 (TMGG…VALF), 79–99 (VGMI…DDFL), 115–135 (LALQ…GGDM), 138–158 (IFGY…FWLV), 169–189 (GIDG…GVIA), 195–215 (MDIL…FVFN), 221–243 (VFMG…MALH), and 304–324 (VDFF…AILY).

The protein belongs to the glycosyltransferase 4 family. MraY subfamily. It depends on Mg(2+) as a cofactor.

It is found in the cell membrane. It carries out the reaction UDP-N-acetyl-alpha-D-muramoyl-L-alanyl-gamma-D-glutamyl-L-lysyl-D-alanyl-D-alanine + di-trans,octa-cis-undecaprenyl phosphate = Mur2Ac(oyl-L-Ala-gamma-D-Glu-L-Lys-D-Ala-D-Ala)-di-trans,octa-cis-undecaprenyl diphosphate + UMP. It participates in cell wall biogenesis; peptidoglycan biosynthesis. Its function is as follows. Catalyzes the initial step of the lipid cycle reactions in the biosynthesis of the cell wall peptidoglycan: transfers peptidoglycan precursor phospho-MurNAc-pentapeptide from UDP-MurNAc-pentapeptide onto the lipid carrier undecaprenyl phosphate, yielding undecaprenyl-pyrophosphoryl-MurNAc-pentapeptide, known as lipid I. The protein is Phospho-N-acetylmuramoyl-pentapeptide-transferase of Streptococcus pneumoniae (strain Hungary19A-6).